A 648-amino-acid chain; its full sequence is 1-deoxy-D-xylulose-5-phosphate synthase (648 aa).

Residues His72 and 113 to 115 (GHA) each bind thiamine diphosphate. Residue Asp144 coordinates Mg(2+). Residues 145–146 (GA), Asn173, and Glu363 each bind thiamine diphosphate. Residue Asn173 participates in Mg(2+) binding.

The protein belongs to the transketolase family. DXPS subfamily. In terms of assembly, homodimer. The cofactor is Mg(2+). It depends on thiamine diphosphate as a cofactor.

The enzyme catalyses D-glyceraldehyde 3-phosphate + pyruvate + H(+) = 1-deoxy-D-xylulose 5-phosphate + CO2. Its pathway is metabolic intermediate biosynthesis; 1-deoxy-D-xylulose 5-phosphate biosynthesis; 1-deoxy-D-xylulose 5-phosphate from D-glyceraldehyde 3-phosphate and pyruvate: step 1/1. Its function is as follows. Catalyzes the acyloin condensation reaction between C atoms 2 and 3 of pyruvate and glyceraldehyde 3-phosphate to yield 1-deoxy-D-xylulose-5-phosphate (DXP). The protein is 1-deoxy-D-xylulose-5-phosphate synthase of Symbiobacterium thermophilum (strain DSM 24528 / JCM 14929 / IAM 14863 / T).